Here is a 137-residue protein sequence, read N- to C-terminus: Fluoride-specific ion channel FluC (137 aa).

The next 4 helical transmembrane spans lie at 11–31, 42–62, 75–95, and 107–127; these read IAVS…SLWF, GTLF…ALAL, LIAV…LDTF, and GFYW…GIIL. 2 residues coordinate Na(+): glycine 82 and threonine 85.

This sequence belongs to the fluoride channel Fluc/FEX (TC 1.A.43) family.

It localises to the cell inner membrane. The enzyme catalyses fluoride(in) = fluoride(out). With respect to regulation, na(+) is not transported, but it plays an essential structural role and its presence is essential for fluoride channel function. Its function is as follows. Fluoride-specific ion channel. Important for reducing fluoride concentration in the cell, thus reducing its toxicity. In Trichormus variabilis (strain ATCC 29413 / PCC 7937) (Anabaena variabilis), this protein is Fluoride-specific ion channel FluC.